A 2703-amino-acid polypeptide reads, in one-letter code: Serine/arginine repetitive matrix protein 2 (2703 aa).

Methionine 1 bears the N-acetylmethionine mark. Residues 60-92 (HERKRRVELRCLELEEMMEEQGYEEQQIQEKVA) are a coiled coil. N6-acetyllysine is present on lysine 101. Residues lysine 108 and lysine 130 each participate in a glycyl lysine isopeptide (Lys-Gly) (interchain with G-Cter in SUMO2) cross-link. Residues 141–1007 (ISDSYVDGSS…SGSFHLCPGV (867 aa)) are disordered. Residue tyrosine 145 is modified to Phosphotyrosine. An N6-acetyllysine modification is found at lysine 169. 2 stretches are compositionally biased toward basic residues: residues 186–197 (KQKKKKKKKDRG) and 207–249 (RERK…KRSR). The interval 197–259 (GRRSESSSPR…STTPAPKSRR (63 aa)) is sufficient for RNA-binding. 2 positions are modified to phosphoserine: serine 220 and serine 222. Residues 263 to 284 (STSADSASSSDTSRSRSRSAAA) show a composition bias toward low complexity. A phosphoserine mark is found at serine 295, serine 300, serine 310, serine 322, and serine 323. The segment covering 319–334 (QQPSSPAPSTKQSSSP) has biased composition (low complexity). Residues 335-345 (YEDKDKKEKSA) are compositionally biased toward basic and acidic residues. Serine 349, serine 351, serine 355, and serine 356 each carry phosphoserine. A phosphothreonine mark is found at threonine 357 and threonine 365. Phosphoserine is present on residues serine 375, serine 385, serine 393, serine 396, serine 402, serine 406, serine 422, serine 433, serine 434, serine 435, serine 438, serine 452, serine 482, serine 484, serine 503, serine 505, serine 507, serine 531, serine 533, and serine 540. Polar residues predominate over residues 383 to 396 (PSSQEPVNPSSEAS). A compositionally biased stretch (polar residues) spans 425-437 (PTKGSRHASSSPE). Residues 459–533 (NRSHGRAKRD…SPQRRGRSRS (75 aa)) are compositionally biased toward basic residues. Positions 534-543 (PQRPGWSRSR) are enriched in low complexity. Composition is skewed to basic residues over residues 544-561 (NTQRRGRSRSARRGRSHS), 568-721 (GRSR…RRGR), and 730-740 (NKSRTSQRRSR). A phosphoserine mark is found at serine 700, serine 702, and serine 704. 3 positions are modified to phosphoserine: serine 773, serine 775, and serine 778. A compositionally biased stretch (low complexity) spans 785-817 (SQTPTRRSRSGSSPPKQKSKTPPRQSRSNSPQP). Serine 821 and serine 829 each carry phosphoserine. 2 stretches are compositionally biased toward polar residues: residues 829–851 (SVTNMQADECTATPQRQSHSESS) and 859–874 (RTPSRQSCSGSSPRVK). Threonine 831 and threonine 841 each carry phosphothreonine. A phosphoserine mark is found at serine 846, serine 850, and serine 851. 2 stretches are compositionally biased toward low complexity: residues 875 to 891 (SSTPPRQSPSRSSSPQP) and 898 to 919 (SPRGRSHSSSSSPSPSRVTSRT). 11 positions are modified to phosphoserine: serine 882, serine 909, serine 924, serine 926, serine 928, serine 940, serine 942, serine 944, serine 945, serine 946, and serine 949. Residue threonine 955 is modified to Phosphothreonine. Positions 960–1000 (SGSTSPYLKSMLQTPPDQNLSGSKSPCPQKSRDSPTGSSGS) are enriched in polar residues. Phosphoserine occurs at positions 962 and 964. At tyrosine 966 the chain carries Phosphotyrosine. Threonine 973 is subject to Phosphothreonine. Phosphoserine occurs at positions 980, 984, and 993. The residue at position 995 (threonine 995) is a Phosphothreonine. Phosphoserine occurs at positions 997, 1000, 1011, 1037, and 1038. Residues 1024 to 1057 (VQQKGHTQTWPDTSSPEVMQTQVESPLLQSKSQT) show a composition bias toward polar residues. Positions 1024-1112 (VQQKGHTQTW…TKPDSSIYPL (89 aa)) are disordered. Threonine 1044 is subject to Phosphothreonine. 5 positions are modified to phosphoserine: serine 1048, serine 1064, serine 1066, serine 1067, and serine 1068. The segment covering 1058-1068 (SPKGSLSRSSS) has biased composition (low complexity). At threonine 1071 the chain carries Phosphothreonine. Residues serine 1077, serine 1087, serine 1094, serine 1097, serine 1117, serine 1151, serine 1159, serine 1175, serine 1188, serine 1216, serine 1225, serine 1229, serine 1230, serine 1269, serine 1276, serine 1278, serine 1284, serine 1287, serine 1294, serine 1305, serine 1325, serine 1338, serine 1339, serine 1340, serine 1343, serine 1359, and serine 1360 each carry the phosphoserine modification. Residues 1079–1092 (VKQDKSEISTDPKL) show a composition bias toward basic and acidic residues. Residues 1136–2092 (IQEDVASSCI…RSPGMLEPLG (957 aa)) form a disordered region. A compositionally biased stretch (basic and acidic residues) spans 1146-1158 (PRDKFSPTQDRPE). The span at 1270–1284 (PEHKELSHSPPRENS) shows a compositional bias: basic and acidic residues. Residues 1285–1304 (FESSLEFKNSGPVSEVNTGF) show a composition bias toward polar residues. Threonine 1370 carries the phosphothreonine modification. The segment covering 1371–1387 (PSRERSSSASPELKDGL) has biased composition (basic and acidic residues). Phosphoserine occurs at positions 1372, 1378, and 1380. Threonine 1390 is subject to Phosphothreonine. Over residues 1397–1408 (SGSSPGLRDGSG) the composition is skewed to low complexity. A phosphoserine mark is found at serine 1400 and serine 1407. Threonine 1409 carries the post-translational modification Phosphothreonine. Over residues 1409 to 1431 (TPSRHSLSGSSPGMKDTPQTPSR) the composition is skewed to polar residues. Serine 1414, serine 1416, serine 1418, and serine 1419 each carry phosphoserine. The residue at position 1428 (threonine 1428) is a Phosphothreonine. Serine 1438 and serine 1439 each carry phosphoserine. Threonine 1448 carries the post-translational modification Phosphothreonine. A phosphoserine mark is found at serine 1453, serine 1455, serine 1457, serine 1458, and serine 1465. The segment covering 1454-1468 (HSPSSPERNNKSVTP) has biased composition (polar residues). At threonine 1467 the chain carries Phosphothreonine. Phosphoserine occurs at positions 1473, 1475, 1477, and 1478. Over residues 1475–1489 (SESSVEQKNLARTSP) the composition is skewed to polar residues. Position 1487 is a phosphothreonine (threonine 1487). The span at 1490–1499 (GQRSRSGSSQ) shows a compositional bias: low complexity. Residues serine 1493, serine 1495, serine 1497, serine 1498, and serine 1508 each carry the phosphoserine modification. The segment covering 1511-1523 (ERSESDSSPDSKP) has biased composition (basic and acidic residues). Residues 1524 to 1533 (KTRTPLRQRS) show a composition bias toward basic residues. A phosphoserine mark is found at serine 1533, serine 1535, serine 1537, serine 1538, serine 1554, serine 1556, serine 1557, serine 1572, serine 1576, serine 1577, serine 1604, serine 1614, serine 1647, serine 1649, and serine 1650. Low complexity predominate over residues 1604-1613 (SPEGSSSSES). The span at 1637–1647 (KSHTPPRRRSS) shows a compositional bias: basic residues. At threonine 1654 the chain carries Phosphothreonine. 6 positions are modified to phosphoserine: serine 1683, serine 1685, serine 1687, serine 1688, serine 1718, and serine 1720. 2 stretches are compositionally biased toward basic residues: residues 1725 to 1745 (GLQRSRSRSRREKTRTTRRRD) and 1754 to 1772 (SRRRQRSRSRSRVTRRRRG). Phosphoserine is present on residues serine 1774, serine 1778, serine 1810, serine 1813, serine 1832, and serine 1834. Residues 1776–1789 (YHSRSPTRQESSRT) are compositionally biased toward low complexity. The span at 1790 to 1810 (SSRRRRGRSRTPLTSRKRSRS) shows a compositional bias: basic residues. Basic residues predominate over residues 1818-2020 (KRSRSRASPA…PRAARGKRSL (203 aa)). The residue at position 1836 (threonine 1836) is a Phosphothreonine. 2 positions are modified to phosphoserine: serine 1840 and serine 1846. Phosphothreonine is present on threonine 1848. A phosphoserine mark is found at serine 1849, serine 1869, serine 1872, serine 1876, and serine 1878. Phosphothreonine is present on residues threonine 1880 and threonine 1884. Residues serine 1898 and serine 1900 each carry the phosphoserine modification. Phosphothreonine is present on residues threonine 1902 and threonine 1906. A phosphoserine mark is found at serine 1910 and serine 1912. Phosphothreonine is present on residues threonine 1914 and threonine 1918. Residues serine 1922, serine 1924, and serine 1927 each carry the phosphoserine modification. A Phosphothreonine modification is found at threonine 1930. Residues serine 1936, serine 1939, serine 1948, serine 1951, serine 1960, serine 1963, serine 1970, and serine 1972 each carry the phosphoserine modification. A Phosphothreonine modification is found at threonine 1974. Residues serine 1982 and serine 1984 each carry the phosphoserine modification. At threonine 1986 the chain carries Phosphothreonine. Phosphoserine occurs at positions 1994, 1996, 1998, and 2019. At threonine 2021 the chain carries Phosphothreonine. Residues 2022 to 2047 (RSPPAIRRRSASGSSSDRSRSATPPA) show a composition bias toward low complexity. Phosphoserine occurs at positions 2023 and 2042. Position 2044 is a phosphothreonine (threonine 2044). Serine 2052 and serine 2054 each carry phosphoserine. Threonine 2056 bears the Phosphothreonine mark. The span at 2062–2076 (SSSRMSCFSRPSMSP) shows a compositional bias: low complexity. Phosphoserine occurs at positions 2070, 2073, 2075, and 2084. Threonine 2096 is subject to Phosphothreonine. Residues arginine 2146, arginine 2159, arginine 2183, and arginine 2198 each carry the omega-N-methylarginine modification. Position 2224 is a phosphoserine (serine 2224). Arginine 2226 and arginine 2240 each carry omega-N-methylarginine. Phosphothreonine is present on residues threonine 2241 and threonine 2254. Phosphoserine is present on serine 2262. The interval 2263–2703 (LTGSGTPPTA…SNRHRSSRSP (441 aa)) is disordered. A phosphothreonine mark is found at threonine 2268 and threonine 2281. Residues 2269–2283 (PPTAANYPSSSRTPQ) show a composition bias toward polar residues. Omega-N-methylarginine is present on arginine 2295. 3 positions are modified to phosphoserine: serine 2296, serine 2321, and serine 2329. Threonine 2334 carries the post-translational modification Phosphothreonine. Serine 2335 carries the post-translational modification Phosphoserine. Arginine 2337 carries the post-translational modification Asymmetric dimethylarginine; alternate. Arginine 2337 is subject to Omega-N-methylarginine; alternate. Serine 2347, serine 2351, and serine 2360 each carry phosphoserine. Threonine 2362 is modified (phosphothreonine). Phosphoserine is present on residues serine 2365, serine 2368, serine 2381, serine 2384, serine 2404, and serine 2408. Composition is skewed to polar residues over residues 2410–2443 (FSDQSRSVVQTTPVAGSQSLSSGTVAKSTSSASD) and 2467–2476 (TGAQQPSTLA). Over residues 2487 to 2521 (SSSSSSSSSSSSSSSSSSSSSSSSGSSSSDSEGSS) the composition is skewed to low complexity. Phosphoserine is present on serine 2535. Position 2537 is a phosphothreonine (threonine 2537). Residue lysine 2541 forms a Glycyl lysine isopeptide (Lys-Gly) (interchain with G-Cter in SUMO2) linkage. Phosphothreonine is present on threonine 2553. Positions 2562 to 2602 (SSSSSSSSSSSSSSSSSSSSSSSSSSSSSSSSSSSSSSSSS) are enriched in low complexity. Residues 2605–2622 (PAKPGPQALPKPASPKKP) show a composition bias toward pro residues. Phosphoserine is present on residues serine 2618, serine 2629, serine 2631, serine 2638, serine 2642, serine 2644, serine 2646, serine 2648, serine 2656, and serine 2660. Residues 2623 to 2643 (PPGERRSRSPRKPIDSLRDSR) are compositionally biased toward basic and acidic residues. Threonine 2689 carries the post-translational modification Phosphothreonine. A Phosphoserine modification is found at serine 2691. A compositionally biased stretch (basic residues) spans 2694-2703 (SNRHRSSRSP).

It belongs to the CWC21 family. Component of pre-catalytic, catalytic and post-catalytic spliceosome complexes. Found in a pre-mRNA splicing complex with SFRS4, SFRS5, SNRP70, SNRPA1, SRRM1 and SRRM2. Component of the minor spliceosome, which splices U12-type introns. Interacts with DHX8. Interacts with CACTIN.

The protein localises to the nucleus. It is found in the nucleus speckle. In terms of biological role, required for pre-mRNA splicing as component of the spliceosome. As a component of the minor spliceosome, involved in the splicing of U12-type introns in pre-mRNAs. This chain is Serine/arginine repetitive matrix protein 2 (Srrm2), found in Mus musculus (Mouse).